The sequence spans 525 residues: 2,3-bisphosphoglycerate-independent phosphoglycerate mutase (525 aa).

Aspartate 18 and serine 68 together coordinate Mn(2+). The Phosphoserine intermediate role is filled by serine 68. Substrate is bound by residues histidine 129, 159-160 (RD), arginine 194, arginine 200, 269-272 (RADR), and lysine 345. Mn(2+) is bound by residues aspartate 413, histidine 417, aspartate 454, histidine 455, and histidine 473.

Belongs to the BPG-independent phosphoglycerate mutase family. As to quaternary structure, monomer. Requires Mn(2+) as cofactor.

It carries out the reaction (2R)-2-phosphoglycerate = (2R)-3-phosphoglycerate. It functions in the pathway carbohydrate degradation; glycolysis; pyruvate from D-glyceraldehyde 3-phosphate: step 3/5. Functionally, catalyzes the interconversion of 2-phosphoglycerate and 3-phosphoglycerate. This chain is 2,3-bisphosphoglycerate-independent phosphoglycerate mutase, found in Chromohalobacter salexigens (strain ATCC BAA-138 / DSM 3043 / CIP 106854 / NCIMB 13768 / 1H11).